An 890-amino-acid chain; its full sequence is Kinesin-like protein KIF20A (890 aa).

An N-acetylserine modification is found at Ser-2. 3 positions are modified to phosphoserine: Ser-7, Ser-14, and Ser-21. A Kinesin motor domain is found at 64–507; the sequence is KVKVYLRVRP…AKFSAIASQL (444 aa). An ATP-binding site is contributed by 160–167; that stretch reads GVTNSGKT. Position 528 is a phosphoserine; by PLK1 (Ser-528). A phosphoserine mark is found at Ser-532, Ser-662, Ser-668, Ser-685, and Ser-825. Residues 611–762 adopt a coiled-coil conformation; that stretch reads LDTQKELLEE…ESLQSAERAC (152 aa). The interval 763–890 is globular; sequence CHSTGAGKLR…LKSGPFGKKY (128 aa). A disordered region spans residues 832-865; that stretch reads TNQENQQPNQQPPGKKPFLRNLLPRTPTCQSSTD. Thr-857 carries the post-translational modification Phosphothreonine. 3 positions are modified to phosphoserine: Ser-867, Ser-878, and Ser-883.

This sequence belongs to the TRAFAC class myosin-kinesin ATPase superfamily. Kinesin family. Post-translationally, phosphorylated by PLK1 at Ser-528 during mitosis, creating a docking site for PLK1 and recruiting PLK1 at central spindle.

It localises to the golgi apparatus. The protein localises to the cytoplasm. It is found in the cytoskeleton. The protein resides in the spindle. Its function is as follows. Mitotic kinesin required for chromosome passenger complex (CPC)-mediated cytokinesis. Following phosphorylation by PLK1, involved in recruitment of PLK1 to the central spindle. Interacts with guanosine triphosphate (GTP)-bound forms of RAB6A and RAB6B. May act as a motor required for the retrograde RAB6 regulated transport of Golgi membranes and associated vesicles along microtubules. Has a microtubule plus end-directed motility. The polypeptide is Kinesin-like protein KIF20A (KIF20A) (Homo sapiens (Human)).